The primary structure comprises 778 residues: Probable protein kinase DDB_G0291133 (778 aa).

Residues 129-162 (LSINNNNNNNNNNGGYKIPSSVNKNSNNYNSNSN) form a disordered region. Residues 177–462 (FDVVCKLGSG…LDQILLNENI (286 aa)) enclose the Protein kinase domain. ATP is bound by residues 183–191 (LGSGSFSDV) and lysine 206. The active-site Proton acceptor is the aspartate 303. 2 residues coordinate Mg(2+): asparagine 308 and aspartate 321. Disordered regions lie at residues 478 to 509 (NIEN…DDNN), 562 to 697 (HFVR…GFYG), and 757 to 778 (SHPQ…QETN). The span at 578–590 (SDEEEDDDDDDDS) shows a compositional bias: acidic residues. Positions 599-651 (SLNNLNNSSSNIGISESNSNNSFSSILEENNESSSSSPLPSLSFSRRLSTSSL) are enriched in low complexity. Residues 652-670 (VTTISPKPNFNTSGNKLFS) show a composition bias toward polar residues. The segment covering 671 to 693 (NENNNSNNNNNNNNNNQNNNNNN) has biased composition (low complexity). The segment covering 757 to 766 (SHPQESDKMS) has biased composition (basic and acidic residues).

The protein belongs to the protein kinase superfamily. Ser/Thr protein kinase family. WEE1 subfamily.

It carries out the reaction L-seryl-[protein] + ATP = O-phospho-L-seryl-[protein] + ADP + H(+). The enzyme catalyses L-threonyl-[protein] + ATP = O-phospho-L-threonyl-[protein] + ADP + H(+). The chain is Probable protein kinase DDB_G0291133 from Dictyostelium discoideum (Social amoeba).